The sequence spans 616 residues: Chaperone protein HtpG (616 aa).

The a; substrate-binding stretch occupies residues 1–333 (MKKQFDTEVN…CQDLPLNVSR (333 aa)). The tract at residues 334 to 542 (EILQQNKILS…SNDPTYQMQK (209 aa)) is b. The interval 543–616 (IMLSMGQEVK…INEFIEKDFL (74 aa)) is c.

This sequence belongs to the heat shock protein 90 family. Homodimer.

Its subcellular location is the cytoplasm. Molecular chaperone. Has ATPase activity. This is Chaperone protein HtpG from Borreliella burgdorferi (strain ATCC 35210 / DSM 4680 / CIP 102532 / B31) (Borrelia burgdorferi).